Reading from the N-terminus, the 183-residue chain is MEGVDVKAPRPGCGGDDGGAAAASLSARREEEEEGAVVGGEDEQVERFYALLANIRALRGMYSRYNGEEGAAGGDGDGASGRKRARRAEPPWRPAFRMEDFEFEEAAAGAGDDDAACSGRTTKKQRSGGGGHGAAVEKRRTEKEAAAAAAEDDDDEQEGGEVVEGKEEHRPGRRVEAHGPTDQ.

Disordered stretches follow at residues 1–40 and 66–183; these read MEGV…VVGG and NGEE…PTDQ. A compositionally biased stretch (acidic residues) spans 31-40; it reads EEEEGAVVGG. A compositionally biased stretch (gly residues) spans 70–79; that stretch reads GAAGGDGDGA. Over residues 101–115 the composition is skewed to acidic residues; that stretch reads FEFEEAAAGAGDDDA. Basic and acidic residues predominate over residues 135–145; that stretch reads AVEKRRTEKEA. Acidic residues predominate over residues 150–161; sequence AEDDDDEQEGGE. Over residues 163–183 the composition is skewed to basic and acidic residues; it reads VEGKEEHRPGRRVEAHGPTDQ.

The protein belongs to the NPR1-interactor family. In terms of assembly, interacts with NPR1/NH1. Interacts with NPR3/NH3.

It is found in the nucleus. Binds to and represses NPR1/NH1-mediated transcriptional activation of LG2 in vitro. This Oryza sativa subsp. japonica (Rice) protein is NRR repressor homolog 1.